The sequence spans 104 residues: Defensin-2 (104 aa).

Residues 1-19 (MKFFVLFAILIAIVHASCA) form the signal peptide. 3 disulfide bridges follow: Cys-64/Cys-95, Cys-81/Cys-100, and Cys-85/Cys-102.

It belongs to the invertebrate defensin family. Type 1 subfamily. In terms of tissue distribution, low expression in head and thorax.

Its subcellular location is the secreted. Functionally, antibacterial peptide mostly active against Gram-positive bacteria. This chain is Defensin-2, found in Apis mellifera (Honeybee).